Here is a 240-residue protein sequence, read N- to C-terminus: Urease accessory protein UreF (240 aa).

This sequence belongs to the UreF family. As to quaternary structure, ureD, UreF and UreG form a complex that acts as a GTP-hydrolysis-dependent molecular chaperone, activating the urease apoprotein by helping to assemble the nickel containing metallocenter of UreC. The UreE protein probably delivers the nickel.

The protein resides in the cytoplasm. In terms of biological role, required for maturation of urease via the functional incorporation of the urease nickel metallocenter. The chain is Urease accessory protein UreF from Bradyrhizobium sp. (strain BTAi1 / ATCC BAA-1182).